The sequence spans 460 residues: MAFLTHLLVCVFGMGSWVAINGLWVELPLLVTELPEAWYLPSYLTVVIQLANIGPLLVTLMHRFRPGCLSEVPVIFLILCVGTAACILLAFLWNVTSWIQGGQHSVAFIVLTFFLALVDCTSSVTFLPFMSQLPTYYLTTFFIGEGLSGLLPALVALVQGSGITTCVNVTETPGTTLNTMETPITQGNLSPSLPSPSWHQESRYLAPRFSPLLFFLLLSFLTGCCLVAFFLLQRQPWGRQGSIEDLLHSQVTLHSIRPRDTEDTSSLGAPVSSPGKGSVEASVASLRPAQLAFIYSVVAFVNALTNGVLPSVQTYSCLPYGPVAYHLSATLSSVASPLACFLPIFLPNRSLLFLGVLTVLGTGFGAYNMAMAAMSPCPVLQGHWGGEVLIVLSWVLFAACLSYVKVMLGVILRDRSRSALLWCGAAVQLGSLIGALLMFPLVNVLKLFSSADYCSLDCSV.

At 1–6 the chain is on the cytoplasmic side; it reads MAFLTH. Residues 7–27 form a helical membrane-spanning segment; it reads LLVCVFGMGSWVAINGLWVEL. Topologically, residues 28 to 37 are extracellular; that stretch reads PLLVTELPEA. A helical membrane pass occupies residues 38-58; sequence WYLPSYLTVVIQLANIGPLLV. Over 59–71 the chain is Cytoplasmic; the sequence is TLMHRFRPGCLSE. Residues 72-92 traverse the membrane as a helical segment; the sequence is VPVIFLILCVGTAACILLAFL. Topologically, residues 93–105 are extracellular; it reads WNVTSWIQGGQHS. Asparagine 94 carries an N-linked (GlcNAc...) asparagine glycan. Residues 106-126 traverse the membrane as a helical segment; the sequence is VAFIVLTFFLALVDCTSSVTF. The Cytoplasmic portion of the chain corresponds to 127–137; sequence LPFMSQLPTYY. Residues 138-158 form a helical membrane-spanning segment; the sequence is LTTFFIGEGLSGLLPALVALV. Residues 159–211 lie on the Extracellular side of the membrane; sequence QGSGITTCVNVTETPGTTLNTMETPITQGNLSPSLPSPSWHQESRYLAPRFSP. Asparagine 168 is a glycosylation site (N-linked (GlcNAc...) asparagine). The chain crosses the membrane as a helical span at residues 212–232; it reads LLFFLLLSFLTGCCLVAFFLL. Topologically, residues 233–291 are cytoplasmic; sequence QRQPWGRQGSIEDLLHSQVTLHSIRPRDTEDTSSLGAPVSSPGKGSVEASVASLRPAQL. Phosphoserine is present on residues serine 242 and serine 266. The chain crosses the membrane as a helical span at residues 292 to 312; that stretch reads AFIYSVVAFVNALTNGVLPSV. Residues 313-326 lie on the Extracellular side of the membrane; the sequence is QTYSCLPYGPVAYH. Residues 327-347 traverse the membrane as a helical segment; sequence LSATLSSVASPLACFLPIFLP. Residues 348–350 lie on the Cytoplasmic side of the membrane; that stretch reads NRS. Residues 351-371 form a helical membrane-spanning segment; it reads LLFLGVLTVLGTGFGAYNMAM. Topologically, residues 372–387 are extracellular; it reads AAMSPCPVLQGHWGGE. Cysteine 377 and cysteine 454 form a disulfide bridge. The helical transmembrane segment at 388–408 threads the bilayer; the sequence is VLIVLSWVLFAACLSYVKVML. Topologically, residues 409–418 are cytoplasmic; it reads GVILRDRSRS. A helical transmembrane segment spans residues 419-439; the sequence is ALLWCGAAVQLGSLIGALLMF. The Extracellular segment spans residues 440–460; the sequence is PLVNVLKLFSSADYCSLDCSV.

It belongs to the riboflavin transporter family. In terms of tissue distribution, within the small intestine, it is particularly expressed in the jujenum and the ileum. Almost negligible expression in the stomach, duodenum, and large intestine.

Its subcellular location is the cell membrane. It catalyses the reaction riboflavin(in) = riboflavin(out). Its function is as follows. Plasma membrane transporter mediating the uptake by cells of the water soluble vitamin B2/riboflavin that plays a key role in biochemical oxidation-reduction reactions of the carbohydrate, lipid, and amino acid metabolism. The sequence is that of Solute carrier family 52, riboflavin transporter, member 3 (Slc52a3) from Mus musculus (Mouse).